We begin with the raw amino-acid sequence, 136 residues long: Small ribosomal subunit protein bS6 (136 aa).

The tract at residues 96–136 is disordered; sequence VTEPSALARSGSDAEADRAPADEGSVEAAGAEPGSEAEAEA.

This sequence belongs to the bacterial ribosomal protein bS6 family.

Binds together with bS18 to 16S ribosomal RNA. The polypeptide is Small ribosomal subunit protein bS6 (Methylococcus capsulatus (strain ATCC 33009 / NCIMB 11132 / Bath)).